Reading from the N-terminus, the 381-residue chain is ATP-dependent (S)-NAD(P)H-hydrate dehydratase (381 aa).

The region spanning 84–376 is the YjeF C-terminal domain; sequence AEAVVRRITP…EFLGKSLEDI (293 aa). (6S)-NADPHX contacts are provided by residues G197 and 250–256; that span reads NVYEYKR. ATP-binding positions include 290–294 and 309–318; these read KGKAD and GSPRRCGGQG. D319 provides a ligand contact to (6S)-NADPHX.

It belongs to the NnrD/CARKD family. It depends on Mg(2+) as a cofactor.

The catalysed reaction is (6S)-NADHX + ATP = ADP + phosphate + NADH + H(+). It carries out the reaction (6S)-NADPHX + ATP = ADP + phosphate + NADPH + H(+). Its function is as follows. Catalyzes the dehydration of the S-form of NAD(P)HX at the expense of ATP, which is converted to ADP. Together with NAD(P)HX epimerase, which catalyzes the epimerization of the S- and R-forms, the enzyme allows the repair of both epimers of NAD(P)HX, a damaged form of NAD(P)H that is a result of enzymatic or heat-dependent hydration. This Sorghum bicolor (Sorghum) protein is ATP-dependent (S)-NAD(P)H-hydrate dehydratase.